The chain runs to 458 residues: ATP synthase subunit beta (458 aa).

148–155 (GGAGVGKT) lines the ATP pocket.

The protein belongs to the ATPase alpha/beta chains family. F-type ATPases have 2 components, CF(1) - the catalytic core - and CF(0) - the membrane proton channel. CF(1) has five subunits: alpha(3), beta(3), gamma(1), delta(1), epsilon(1). CF(0) has three main subunits: a(1), b(2) and c(9-12). The alpha and beta chains form an alternating ring which encloses part of the gamma chain. CF(1) is attached to CF(0) by a central stalk formed by the gamma and epsilon chains, while a peripheral stalk is formed by the delta and b chains.

Its subcellular location is the cell inner membrane. It carries out the reaction ATP + H2O + 4 H(+)(in) = ADP + phosphate + 5 H(+)(out). Functionally, produces ATP from ADP in the presence of a proton gradient across the membrane. The catalytic sites are hosted primarily by the beta subunits. In Pseudomonas aeruginosa (strain LESB58), this protein is ATP synthase subunit beta.